Consider the following 435-residue polypeptide: Tol-Pal system protein TolB (435 aa).

An N-terminal signal peptide occupies residues 1-24 (MIPMPKMIRSLLLLFCLLPLGAQA).

The protein belongs to the TolB family. The Tol-Pal system is composed of five core proteins: the inner membrane proteins TolA, TolQ and TolR, the periplasmic protein TolB and the outer membrane protein Pal. They form a network linking the inner and outer membranes and the peptidoglycan layer.

The protein localises to the periplasm. In terms of biological role, part of the Tol-Pal system, which plays a role in outer membrane invagination during cell division and is important for maintaining outer membrane integrity. The polypeptide is Tol-Pal system protein TolB (Thioalkalivibrio sulfidiphilus (strain HL-EbGR7)).